We begin with the raw amino-acid sequence, 648 residues long: Indolepyruvate oxidoreductase subunit IorA (648 aa).

4Fe-4S ferredoxin-type domains lie at 585–614 and 616–645; these read PIYQ…WDAE and KKAR…KVRE. Cys-594, Cys-597, Cys-600, Cys-606, Cys-625, Cys-628, Cys-631, and Cys-635 together coordinate [4Fe-4S] cluster.

As to quaternary structure, heterodimer of the IorA and IorB subunits. [4Fe-4S] cluster is required as a cofactor.

The enzyme catalyses indole-3-pyruvate + 2 oxidized [2Fe-2S]-[ferredoxin] + CoA = (indol-3-yl)acetyl-CoA + 2 reduced [2Fe-2S]-[ferredoxin] + CO2 + H(+). In terms of biological role, catalyzes the ferredoxin-dependent oxidative decarboxylation of arylpyruvates. This is Indolepyruvate oxidoreductase subunit IorA (iorA) from Pyrococcus horikoshii (strain ATCC 700860 / DSM 12428 / JCM 9974 / NBRC 100139 / OT-3).